A 938-amino-acid polypeptide reads, in one-letter code: ATP-dependent 6-phosphofructokinase subunit beta (938 aa).

Positions 1–552 (MTQSLPLLNG…HLDNFMAINS (552 aa)) are N-terminal catalytic PFK domain 1. ATP is bound by residues G185, 249-250 (RC), and 279-282 (GDGS). D280 is a binding site for Mg(2+). Beta-D-fructose 6-phosphate contacts are provided by residues 325-327 (SID), R362, 369-371 (MGR), E426, R454, and 460-463 (HVQR). The active-site Proton acceptor is the D327. An interdomain linker region spans residues 553-566 (ADHIEPKLPEHTHM). Positions 567–938 (KIAIVNVGAP…ADHLVGRKKL (372 aa)) are C-terminal regulatory PFK domain 2. Beta-D-fructose 2,6-bisphosphate contacts are provided by residues R637, 695–699 (TLSNN), R733, 740–742 (QGG), K826, 832–835 (HVQQ), and R915.

The protein belongs to the phosphofructokinase type A (PFKA) family. ATP-dependent PFK group I subfamily. Eukaryotic two domain clade 'E' sub-subfamily. Heterooctamer of 4 alpha and 4 beta chains. It depends on Mg(2+) as a cofactor.

Its subcellular location is the cytoplasm. The catalysed reaction is beta-D-fructose 6-phosphate + ATP = beta-D-fructose 1,6-bisphosphate + ADP + H(+). The protein operates within carbohydrate degradation; glycolysis; D-glyceraldehyde 3-phosphate and glycerone phosphate from D-glucose: step 3/4. Allosterically activated by ADP, AMP, or fructose 2,6-bisphosphate, and allosterically inhibited by ATP or citrate. Catalyzes the phosphorylation of D-fructose 6-phosphate to fructose 1,6-bisphosphate by ATP, the first committing step of glycolysis. This Kluyveromyces lactis (strain ATCC 8585 / CBS 2359 / DSM 70799 / NBRC 1267 / NRRL Y-1140 / WM37) (Yeast) protein is ATP-dependent 6-phosphofructokinase subunit beta (PFK2).